Reading from the N-terminus, the 368-residue chain is 4-hydroxy-3-methylbut-2-en-1-yl diphosphate synthase (flavodoxin) (368 aa).

4 residues coordinate [4Fe-4S] cluster: C268, C271, C303, and E310.

Belongs to the IspG family. The cofactor is [4Fe-4S] cluster.

It carries out the reaction (2E)-4-hydroxy-3-methylbut-2-enyl diphosphate + oxidized [flavodoxin] + H2O + 2 H(+) = 2-C-methyl-D-erythritol 2,4-cyclic diphosphate + reduced [flavodoxin]. Its pathway is isoprenoid biosynthesis; isopentenyl diphosphate biosynthesis via DXP pathway; isopentenyl diphosphate from 1-deoxy-D-xylulose 5-phosphate: step 5/6. Converts 2C-methyl-D-erythritol 2,4-cyclodiphosphate (ME-2,4cPP) into 1-hydroxy-2-methyl-2-(E)-butenyl 4-diphosphate. This Bacillus cytotoxicus (strain DSM 22905 / CIP 110041 / 391-98 / NVH 391-98) protein is 4-hydroxy-3-methylbut-2-en-1-yl diphosphate synthase (flavodoxin).